The sequence spans 719 residues: Leucine-rich repeat and fibronectin type-III domain-containing protein 5 (719 aa).

The N-terminal stretch at 1-17 is a signal peptide; the sequence is MEKFLFYLFLIGIAVRA. The LRRNT domain occupies 18–51; sequence QICPKRCVCQILSPNLATLCAKKGLLFVPPNIDR. The Extracellular portion of the chain corresponds to 18–529; the sequence is QICPKRCVCQ…MQSQFLGGTM (512 aa). 7 LRR repeats span residues 52–73, 76–97, 100–121, 124–145, 148–169, 172–193, and 196–217; these read RTVE…DFAN, SLVD…AFAD, NLRA…MFSG, NLHH…AFDD, ALEE…AVEK, SLHT…TFSH, and KMTR…PLFQ. An N-linked (GlcNAc...) asparagine glycan is attached at Asn73. One can recognise an LRRCT domain in the interval 240–286; the sequence is NPLHCNCELLWLRRLSREDDLETCASPALLTGRYFWSIPEEEFLCEP. The Ig-like domain maps to 287–373; it reads PLITRHTHEM…GEATQTVDLH (87 aa). Residues Cys308 and Cys357 are joined by a disulfide bond. 5 N-linked (GlcNAc...) asparagine glycosylation sites follow: Asn330, Asn339, Asn382, Asn406, and Asn452. Positions 385 to 416 are disordered; it reads NHIHEPDPGSSDISTSTKSGSNASSSNGDTKM. Residues 393–412 are compositionally biased toward low complexity; it reads GSSDISTSTKSGSNASSSNG. Residues 414–503 form the Fibronectin type-III domain; the sequence is TKMSQDKIVV…ITSLTATRVV (90 aa). The helical transmembrane segment at 530 to 550 threads the bilayer; it reads IIIIGGIIVASVLVFIIILMI. Residues 551–719 are Cytoplasmic-facing; sequence RYKVCNNNGQ…VQETQRLESI (169 aa). Over residues 614-627 the composition is skewed to low complexity; the sequence is SETCSSQDSSTTTS. The interval 614–719 is disordered; the sequence is SETCSSQDSS…VQETQRLESI (106 aa). Composition is skewed to polar residues over residues 628 to 641, 654 to 677, and 702 to 713; these read ALPP…PVSQ, EPQS…TALQ, and LLTNVDQNVQET.

It belongs to the LRFN family. In terms of assembly, can form heteromeric complexes with LRFN1, LRFN2, LRFN3 and LFRN4. Able to form homomeric complexes across cell junctions, between adjacent cells. Does not interact with DLG1, DLG2 or DLG3. Does not interact with DLG4. In terms of processing, glycosylated. Predominantly expressed in the brain, with a weak, but broad expression in the cerebral cortex and diencephalic nuclei. Strongly expressed in both the pyramidal layer and the dentate gyrus of the hippocampus. Also detected in other parts of the central nervous system, including the olfactory bulb, pons, cerebellum, and medulla oblongata, as well as in the peripheral nervous system, such as the ganglia of cranial nerves and the dorsal root ganglion during gestation.

It is found in the membrane. Cell adhesion molecule that mediates homophilic cell-cell adhesion in a Ca(2+)-independent manner. Promotes neurite outgrowth in hippocampal neurons. In Mus musculus (Mouse), this protein is Leucine-rich repeat and fibronectin type-III domain-containing protein 5 (Lrfn5).